Here is a 314-residue protein sequence, read N- to C-terminus: Ribosomal RNA small subunit methyltransferase H (314 aa).

S-adenosyl-L-methionine is bound by residues G35–H37, D54, F83, D104, and Q111.

The protein belongs to the methyltransferase superfamily. RsmH family.

The protein resides in the cytoplasm. The catalysed reaction is cytidine(1402) in 16S rRNA + S-adenosyl-L-methionine = N(4)-methylcytidine(1402) in 16S rRNA + S-adenosyl-L-homocysteine + H(+). In terms of biological role, specifically methylates the N4 position of cytidine in position 1402 (C1402) of 16S rRNA. This chain is Ribosomal RNA small subunit methyltransferase H, found in Oenococcus oeni (strain ATCC BAA-331 / PSU-1).